We begin with the raw amino-acid sequence, 283 residues long: Bifunctional protein FolD (283 aa).

NADP(+)-binding positions include 165-167 (GRS), Ser-190, and Val-231.

Belongs to the tetrahydrofolate dehydrogenase/cyclohydrolase family. In terms of assembly, homodimer. Interacts with BrxC.

The enzyme catalyses (6R)-5,10-methylene-5,6,7,8-tetrahydrofolate + NADP(+) = (6R)-5,10-methenyltetrahydrofolate + NADPH. The catalysed reaction is (6R)-5,10-methenyltetrahydrofolate + H2O = (6R)-10-formyltetrahydrofolate + H(+). Its pathway is one-carbon metabolism; tetrahydrofolate interconversion. Catalyzes the oxidation of 5,10-methylenetetrahydrofolate to 5,10-methenyltetrahydrofolate and then the hydrolysis of 5,10-methenyltetrahydrofolate to 10-formyltetrahydrofolate. The protein is Bifunctional protein FolD of Bacillus subtilis (strain 168).